The chain runs to 481 residues: MPGGRRGPSRQQLSRSALPSLQTLVGGGLSNGAGLRCRSSSAVGLSAPPLTALITPEPVRHSRIPDLPLDSNLLFETLLLLYLLVALLVQYINIYRTVWWSSYSQPTASTSLNFHLMDAHLAVFIAVMLSRRLVWTLLSEVCVACPASPLCYVLLLVVRVCVLTLCGWVLCWTLLNLFRSHSVLKLLFLGYPFGVYVPLCCLHQDGSPAADCGFADADGADGALLQPRDFLTLLRENLRQQLSGTHTHTHTHTCPPSPELIRSEVQQLKTDFNRRIKEVLFNSLLSAYYVAFLPLCFVKSTQYYDMRWSCEHLIMVWINAFVMLMSHLLPPHYCDLLHRCAAHLGRWQRLEPGSCSNTPQHTWSDSTIWPQGVLVRHSRCLYKAVGPYNVALPSDVSHARFYFLFHKPLRLLNVLIGIECSVVVYQLYSLLRSERWNHTLSLGLILVCNYYVLFKLLRDRLVLGKAYSHPLGSAGLGMKRD.

Transmembrane regions (helical) follow at residues 74-94 (LFET…YINI), 109-129 (STSL…AVML), 150-170 (LCYV…GWVL), 182-202 (SVLK…LCCL), 278-298 (EVLF…LCFV), 313-333 (LIMV…PPHY), 411-431 (LLNV…YSLL), and 437-457 (NHTL…FKLL).

This sequence belongs to the TMEM39 family.

It localises to the endoplasmic reticulum membrane. In terms of biological role, regulates autophagy by controlling the spatial distribution and levels of the intracellular phosphatidylinositol 4-phosphate (PtdIns(4)P) pools. Modulates (PtdIns(4)P) levels by regulating the ER-to-Golgi trafficking of the phosphatidylinositide phosphatase SACM1L. The polypeptide is Transmembrane protein 39A (tmem39a) (Danio rerio (Zebrafish)).